A 332-amino-acid polypeptide reads, in one-letter code: ADP-L-glycero-D-manno-heptose-6-epimerase (332 aa).

Residues Met-10–Ile-11, Asp-31–Lys-32, Lys-38, Lys-53, Met-75–Ser-79, and Asn-92 each bind NADP(+). The active-site Proton acceptor is the Tyr-145. Lys-149 lines the NADP(+) pocket. Position 173 (Asn-173) interacts with substrate. NADP(+) contacts are provided by Val-174 and Lys-182. The active-site Proton acceptor is Lys-182. Residues Arg-184, His-191, Phe-205–Tyr-208, Arg-219, and Tyr-290 each bind substrate.

The protein belongs to the NAD(P)-dependent epimerase/dehydratase family. HldD subfamily. Homopentamer. It depends on NADP(+) as a cofactor.

It carries out the reaction ADP-D-glycero-beta-D-manno-heptose = ADP-L-glycero-beta-D-manno-heptose. It participates in nucleotide-sugar biosynthesis; ADP-L-glycero-beta-D-manno-heptose biosynthesis; ADP-L-glycero-beta-D-manno-heptose from D-glycero-beta-D-manno-heptose 7-phosphate: step 4/4. Functionally, catalyzes the interconversion between ADP-D-glycero-beta-D-manno-heptose and ADP-L-glycero-beta-D-manno-heptose via an epimerization at carbon 6 of the heptose. In Fusobacterium nucleatum subsp. nucleatum (strain ATCC 25586 / DSM 15643 / BCRC 10681 / CIP 101130 / JCM 8532 / KCTC 2640 / LMG 13131 / VPI 4355), this protein is ADP-L-glycero-D-manno-heptose-6-epimerase.